The chain runs to 302 residues: MVTEQEIEAIGKTLVDPKQPLQARFRALFTLRGLGGPDAISWISRGFEDSSALLKHELAYCLGQMRDARAIPVLADVLQDTSQEPMVRHEAGEALGAIGNPEVLGLLKQYSTDPVVEVAETCQLAVGRLEWLQQHPGEATCAGPYLSVDPAPPAAEQDVGRLREALLDEARPLFERYRAMFALRNVGGKEAALALAEGLQCGSALFRHEVGYVLGQLQHEAAVPGLAATLARTTESPMVRHECAEALGAIARPACLAALREHIEDPEQVVRESCEVALDMYEYESSQDFQYADGLERLRPPP.

Met1 carries the post-translational modification N-acetylmethionine. 5 HEAT-like PBS-type repeats span residues 54-80, 87-113, 175-201, 206-232, and 239-265; these read LKHE…VLQD, VRHE…YSTD, ERYR…GLQC, FRHE…TLAR, and VRHE…HIED. Fe cation is bound by residues His56, His89, and Glu90. His208, His241, and Glu242 together coordinate Fe cation.

Belongs to the deoxyhypusine hydroxylase family. Requires Fe(2+) as cofactor.

It catalyses the reaction [eIF5A protein]-deoxyhypusine + AH2 + O2 = [eIF5A protein]-hypusine + A + H2O. The protein operates within protein modification; eIF5A hypusination. Functionally, catalyzes the hydroxylation of the N(6)-(4-aminobutyl)-L-lysine intermediate produced by deoxyhypusine synthase/DHPS on a critical lysine of the eukaryotic translation initiation factor 5A/eIF-5A. This is the second step of the post-translational modification of that lysine into an unusual amino acid residue named hypusine. Hypusination is unique to mature eIF-5A factor and is essential for its function. This Mus musculus (Mouse) protein is Deoxyhypusine hydroxylase.